We begin with the raw amino-acid sequence, 99 residues long: Cell division protein FtsB (99 aa).

Topologically, residues Met-1 to Phe-3 are cytoplasmic. A helical transmembrane segment spans residues Phe-4–Ser-21. Topologically, residues Gly-22 to Gln-99 are periplasmic. Residues Val-31–Asn-73 adopt a coiled-coil conformation.

This sequence belongs to the FtsB family. Part of a complex composed of FtsB, FtsL and FtsQ.

The protein resides in the cell inner membrane. Its function is as follows. Essential cell division protein. May link together the upstream cell division proteins, which are predominantly cytoplasmic, with the downstream cell division proteins, which are predominantly periplasmic. This is Cell division protein FtsB from Shewanella sp. (strain ANA-3).